The chain runs to 83 residues: Conotoxin MiEr92 (83 aa).

Residues 1–22 form the signal peptide; that stretch reads MKLTCVLIVIMLFLTVCPLITA. Residues 23–49 constitute a propeptide that is removed on maturation; sequence DHSRDKQEHPAMRLKDRIRYLRRGKLT. 3 disulfide bridges follow: Cys-52-Cys-67, Cys-59-Cys-72, and Cys-66-Cys-81.

It belongs to the conotoxin O1 superfamily. Expressed by the venom duct.

The protein localises to the secreted. This Conus miles (Soldier cone) protein is Conotoxin MiEr92.